Reading from the N-terminus, the 385-residue chain is Glycerol-3-phosphate dehydrogenase [NAD(+)] 1 (385 aa).

NAD(+)-binding positions include 29-34, Phe-121, Lys-144, and Ala-177; that span reads GSGNWG. Lys-144 contributes to the substrate binding site. The active-site Proton acceptor is the Lys-232. 2 residues coordinate NAD(+): Arg-296 and Gln-325. 296-297 lines the substrate pocket; it reads RN. Position 376 is a phosphoserine (Ser-376). A Phosphothreonine modification is found at Thr-382.

This sequence belongs to the NAD-dependent glycerol-3-phosphate dehydrogenase family.

The protein resides in the cytoplasm. The enzyme catalyses sn-glycerol 3-phosphate + NAD(+) = dihydroxyacetone phosphate + NADH + H(+). In Schizosaccharomyces pombe (strain 972 / ATCC 24843) (Fission yeast), this protein is Glycerol-3-phosphate dehydrogenase [NAD(+)] 1 (gpd1).